Reading from the N-terminus, the 646-residue chain is Autophagy-related protein 28 (646 aa).

Disordered regions lie at residues 1 to 148 and 221 to 245; these read MSSP…HVDN and PTRS…RGLK. Residues 12-21 are compositionally biased toward polar residues; the sequence is SPRQRLSNPL. Positions 63–75 are enriched in low complexity; that stretch reads SATSTRRSSSPAS. The segment covering 106–122 has biased composition (polar residues); the sequence is MMMNQHPSRQSTVSSHG. Coiled-coil stretches lie at residues 283–350 and 485–514; these read LDKM…MEDV and QQAA…ESKH. 2 disordered regions span residues 475–494 and 546–612; these read SQAG…SQLS and AAAV…RGSA. 2 stretches are compositionally biased toward basic and acidic residues: residues 557-575 and 588-597; these read STDK…SHDE and RMEDHDHDPP.

This sequence belongs to the ATG28 family.

It is found in the cytoplasm. Its subcellular location is the vacuole membrane. The protein resides in the cytoplasmic vesicle membrane. Required for the autophagic degradation of peroxisomes called pexophagy, but not essential for general autophagy. Involved in resistance to elevated pH. This is Autophagy-related protein 28 from Gibberella zeae (strain ATCC MYA-4620 / CBS 123657 / FGSC 9075 / NRRL 31084 / PH-1) (Wheat head blight fungus).